A 72-amino-acid polypeptide reads, in one-letter code: MKTMKNSAAREAFKGANHPAGMVSEEELKALVGGNDVNPETTPATTSSWTCITAGVTVSASLCPTTKCTSRC.

A disordered region spans residues 1-21 (MKTMKNSAAREAFKGANHPAG). Residues 1–40 (MKTMKNSAAREAFKGANHPAGMVSEEELKALVGGNDVNPE) constitute a propeptide that is removed on maturation. Threonine 41 is modified (2-oxobutanoic acid). Residues threonine 42, threonine 45, and threonine 46 each carry the (Z)-2,3-didehydrobutyrine modification. The segment at residues 47–51 (SSWTC) is a cross-link (lanthionine (Ser-Cys)). Serine 48 bears the 2,3-didehydroalanine (Ser) mark. (Z)-2,3-didehydrobutyrine occurs at positions 53 and 57. Positions 59 to 63 (SASLC) form a cross-link, lanthionine (Ser-Cys). 2 cross-links (beta-methyllanthionine (Thr-Cys)) span residues 65–68 (TTKC) and 69–72 (TSRC). The residue at position 66 (threonine 66) is a (Z)-2,3-didehydrobutyrine.

Post-translationally, maturation of lantibiotics involves the enzymatic conversion of Thr, and Ser into dehydrated AA and the formation of thioether bonds with cysteine. This is followed by membrane translocation and cleavage of the modified precursor. In terms of processing, the 2,3-didehydrobutyrines are determined to be the Z-isomers.

It localises to the secreted. Lanthionine-containing peptide antibiotic (lantibiotic) active on Gram-positive bacteria. The bactericidal activity of lantibiotics is based on depolarization of energized bacterial cytoplasmic membranes, initiated by the formation of aqueous transmembrane pores. When present individually, LchA2 exhibits activity towards B.subtilis L1 (IC(50)=30 uM), Rhodococcus sp. SS2 (IC(50)=16.6 uM), M.luteus B1314 (IC(50)=2.6 uM), B.megaterium VKM41 (IC(50)=2 uM), S.aureus 209p (IC(50)=20 uM), B.pumilus 2001, B.globigii I, B.amyloliquefaciens I, M.smegmatis 1171 and M.phlei 1291. However, when combined with LchA1, it displays much stronger activity against B.subtilis L1 (IC(50)=0.64 uM), Rhodococcus sp. SS2 (IC(50)=0.64 uM), M.luteus B1314 (IC(50)=0.09 uM), B.megaterium VKM41 (IC(50)=0.12 uM) and S.aureus 209p (IC(50)=0.64 uM). The activity of the combined LchA1 and LchA2 peptides is strongest at a molar ratio of 1. Even when applied at 17-fold concentration of the highest IC(50) values for Gram-positive bacteria, neither the individual nor the combined peptides display activity against Gram-negative bacteria P.aeruginosa PAO1, P.putida I-97 or E.coli C600. This chain is Lantibiotic lichenicidin VK21 A2, found in Bacillus licheniformis.